We begin with the raw amino-acid sequence, 417 residues long: DNA primase DnaG (417 aa).

One can recognise a Toprim domain in the interval D171–I257. Mg(2+) contacts are provided by E177, D219, and D221. Residues V278–P325 form a disordered region. Residues P279–P289 show a composition bias toward basic and acidic residues.

The protein belongs to the archaeal DnaG primase family. As to quaternary structure, forms a ternary complex with MCM helicase and DNA. Requires Mg(2+) as cofactor.

The catalysed reaction is ssDNA + n NTP = ssDNA/pppN(pN)n-1 hybrid + (n-1) diphosphate.. Its function is as follows. RNA polymerase that catalyzes the synthesis of short RNA molecules used as primers for DNA polymerase during DNA replication. The polypeptide is DNA primase DnaG (Methanosphaerula palustris (strain ATCC BAA-1556 / DSM 19958 / E1-9c)).